The sequence spans 427 residues: 4-hydroxy-3-methylbut-2-en-1-yl diphosphate synthase (flavodoxin) (427 aa).

The [4Fe-4S] cluster site is built by Cys-300, Cys-303, Cys-346, and Glu-353.

This sequence belongs to the IspG family. The cofactor is [4Fe-4S] cluster.

The catalysed reaction is (2E)-4-hydroxy-3-methylbut-2-enyl diphosphate + oxidized [flavodoxin] + H2O + 2 H(+) = 2-C-methyl-D-erythritol 2,4-cyclic diphosphate + reduced [flavodoxin]. The protein operates within isoprenoid biosynthesis; isopentenyl diphosphate biosynthesis via DXP pathway; isopentenyl diphosphate from 1-deoxy-D-xylulose 5-phosphate: step 5/6. Functionally, converts 2C-methyl-D-erythritol 2,4-cyclodiphosphate (ME-2,4cPP) into 1-hydroxy-2-methyl-2-(E)-butenyl 4-diphosphate. The sequence is that of 4-hydroxy-3-methylbut-2-en-1-yl diphosphate synthase (flavodoxin) from Chromobacterium violaceum (strain ATCC 12472 / DSM 30191 / JCM 1249 / CCUG 213 / NBRC 12614 / NCIMB 9131 / NCTC 9757 / MK).